A 654-amino-acid chain; its full sequence is Smc-like protein Sph3 (654 aa).

Coiled coils occupy residues 135 to 290 (TDAI…LQTV) and 341 to 503 (IRGT…LTAA).

This sequence belongs to the Sph1/Sph2 family.

Functionally, involved in cell-shape determination. Required for the formation of rods and wild-type-like motility. The polypeptide is Smc-like protein Sph3 (Haloferax volcanii (strain ATCC 29605 / DSM 3757 / JCM 8879 / NBRC 14742 / NCIMB 2012 / VKM B-1768 / DS2) (Halobacterium volcanii)).